A 252-amino-acid chain; its full sequence is Small ribosomal subunit protein uS2 (252 aa).

This sequence belongs to the universal ribosomal protein uS2 family. As to quaternary structure, component of the small ribosomal subunit. Mature ribosomes consist of a small (40S) and a large (60S) subunit. The 40S subunit contains about 33 different proteins and 1 molecule of RNA (18S). The 60S subunit contains about 49 different proteins and 3 molecules of RNA (25S, 5.8S and 5S). Interacts with RPS21.

It localises to the cytoplasm. Its function is as follows. Required for the assembly and/or stability of the 40S ribosomal subunit. Required for the processing of the 20S rRNA-precursor to mature 18S rRNA in a late step of the maturation of 40S ribosomal subunits. This Encephalitozoon cuniculi (strain GB-M1) (Microsporidian parasite) protein is Small ribosomal subunit protein uS2.